Reading from the N-terminus, the 176-residue chain is O-acetyl-ADP-ribose deacetylase (176 aa).

The Macro domain maps to 1–175; sequence MSGRINVVQG…LYQRLLGQYD (175 aa). Substrate contacts are provided by residues 11 to 12, asparagine 25, 33 to 35, and 122 to 126; these read DI, GVD, and STGIY. Aspartate 35 functions as the Proton acceptor in the catalytic mechanism.

Belongs to the MacroD-type family. YmdB subfamily. Homodimer. Interacts with RNase III.

The catalysed reaction is 3''-O-acetyl-ADP-D-ribose + H2O = ADP-D-ribose + acetate + H(+). It catalyses the reaction 2''-O-acetyl-ADP-D-ribose + H2O = ADP-D-ribose + acetate + H(+). Its function is as follows. Deacetylates O-acetyl-ADP ribose to yield ADP-ribose and free acetate. Down-regulates ribonuclease 3 (RNase III) activity. Acts by interacting directly with the region of the ribonuclease that is required for dimerization/activation. The polypeptide is O-acetyl-ADP-ribose deacetylase (Cronobacter turicensis (strain DSM 18703 / CCUG 55852 / LMG 23827 / z3032)).